The primary structure comprises 272 residues: MSSPLLPVGVFDSGVGGLTVARAIIDQLPDEDIVYVGDTGNGPYGPLSIPEIRAHALAICDDLVGRGVKILVIACNTASAACLRDARERYDVPVVEVILPAVRRAVAATRNGRIGVIGTRATIASHAYQDAFAAARDTEITAVACPRFVDFVECGVTSGRQVLGLAEGYLEPLQRSGVDTLVLGCTHYPLLAGLIQLAMGENVTLVSSAEETAKEVLRVLTERDLLRRHDAPPVNRVFEATGDPEAFIQLAARFLGPAVSGVQPARLHSRVR.

Substrate contacts are provided by residues 12–13 (DS) and 44–45 (YG). Residue C75 is the Proton donor/acceptor of the active site. Residue 76-77 (NT) coordinates substrate. The active-site Proton donor/acceptor is C185. 186–187 (TH) provides a ligand contact to substrate.

It belongs to the aspartate/glutamate racemases family.

The enzyme catalyses L-glutamate = D-glutamate. It functions in the pathway cell wall biogenesis; peptidoglycan biosynthesis. In terms of biological role, provides the (R)-glutamate required for cell wall biosynthesis. This is Glutamate racemase from Mycobacterium leprae (strain TN).